We begin with the raw amino-acid sequence, 103 residues long: MADDKDSLPKLKDLAFLKNQLESLQRRVEDEVNSGVGQDGSLLSSPFLKGFLAGYVVAKLRASAVLGFAVGTCTGIYAAQAYAVPNVEKTLRDYLQLLRKGPD.

A helical transmembrane segment spans residues alanine 62–valine 84.

It is found in the mitochondrion inner membrane. Required to maintain cellular respiration. This is SLC35A4 upstream open reading frame protein from Homo sapiens (Human).